A 258-amino-acid chain; its full sequence is Mitochondrial distribution and morphology protein 12 (258 aa).

Positions 1 to 233 (MSFDIHWSNL…WPSWIELDFN (233 aa)) constitute an SMP-LTD domain. Positions 238 to 258 (EDLQQSKDTPTTANTGTTTTN) are disordered. Low complexity predominate over residues 246-258 (TPTTANTGTTTTN).

This sequence belongs to the MDM12 family. In terms of assembly, component of the ER-mitochondria encounter structure (ERMES) or MDM complex, composed of MMM1, MDM10, MDM12 and MDM34. An MMM1 homodimer associates with one molecule of MDM12 on each side in a pairwise head-to-tail manner, and the SMP-LTD domains of MMM1 and MDM12 generate a continuous hydrophobic tunnel for phospholipid trafficking.

The protein localises to the mitochondrion outer membrane. It is found in the endoplasmic reticulum membrane. Its function is as follows. Component of the ERMES/MDM complex, which serves as a molecular tether to connect the endoplasmic reticulum (ER) and mitochondria. Components of this complex are involved in the control of mitochondrial shape and protein biogenesis, and function in nonvesicular lipid trafficking between the ER and mitochondria. MDM12 is required for the interaction of the ER-resident membrane protein MMM1 and the outer mitochondrial membrane-resident beta-barrel protein MDM10. The MDM12-MMM1 subcomplex functions in the major beta-barrel assembly pathway that is responsible for biogenesis of all mitochondrial outer membrane beta-barrel proteins, and acts in a late step after the SAM complex. The MDM10-MDM12-MMM1 subcomplex further acts in the TOM40-specific pathway after the action of the MDM12-MMM1 complex. Essential for establishing and maintaining the structure of mitochondria and maintenance of mtDNA nucleoids. In Zygosaccharomyces rouxii (strain ATCC 2623 / CBS 732 / NBRC 1130 / NCYC 568 / NRRL Y-229), this protein is Mitochondrial distribution and morphology protein 12.